A 274-amino-acid polypeptide reads, in one-letter code: Non-homologous end joining protein Ku (274 aa).

One can recognise a Ku domain in the interval 11–195; that stretch reads ITFGLVNVPV…KYKITPKELS (185 aa).

The protein belongs to the prokaryotic Ku family. As to quaternary structure, homodimer. Interacts with LigD.

Its function is as follows. With LigD forms a non-homologous end joining (NHEJ) DNA repair enzyme, which repairs dsDNA breaks with reduced fidelity. Binds linear dsDNA with 5'- and 3'- overhangs but not closed circular dsDNA nor ssDNA. Recruits and stimulates the ligase activity of LigD. This Coxiella burnetii (strain RSA 331 / Henzerling II) protein is Non-homologous end joining protein Ku.